Reading from the N-terminus, the 82-residue chain is DNA gyrase inhibitor YacG (82 aa).

C9, C12, C27, and C31 together coordinate Zn(2+). A disordered region spans residues 44-82 (IGLPHEGDPGDAPVEYLDDRDLTQPSPERQNESFHRYSE). Basic and acidic residues predominate over residues 72–82 (RQNESFHRYSE).

Belongs to the DNA gyrase inhibitor YacG family. In terms of assembly, interacts with GyrB. The cofactor is Zn(2+).

Its function is as follows. Inhibits all the catalytic activities of DNA gyrase by preventing its interaction with DNA. Acts by binding directly to the C-terminal domain of GyrB, which probably disrupts DNA binding by the gyrase. This is DNA gyrase inhibitor YacG from Rhodopirellula baltica (strain DSM 10527 / NCIMB 13988 / SH1).